Consider the following 628-residue polypeptide: Phomenoic acid biosynthesis cluster MFS-type transporter (628 aa).

The next 14 helical transmembrane spans lie at Ile-102 to Ala-122, Val-150 to Leu-170, Trp-174 to Pro-194, Val-204 to Asn-224, Ala-232 to Gly-252, Trp-262 to Leu-282, Phe-302 to Gly-322, Asn-329 to Val-349, Met-375 to Ile-395, Ala-407 to Val-427, Phe-435 to Phe-455, Gly-488 to Ile-508, Ile-524 to Ile-544, and Ala-595 to Phe-615.

The protein belongs to the major facilitator superfamily. TCR/Tet family.

The protein localises to the cell membrane. Its function is as follows. MFS-type transporter; part of the gene cluster that mediates the biosynthesis of phomenoic acid, a long chain aliphatic carboxylic acid that does not appear to be essential for pathogenicity but may play a role in allowing to outcompete other fungi in the environmental niche via its antifungal properties. Is probably involved in the efflux of phomenoic acid. The polypeptide is Phomenoic acid biosynthesis cluster MFS-type transporter (Leptosphaeria maculans (strain JN3 / isolate v23.1.3 / race Av1-4-5-6-7-8) (Blackleg fungus)).